The following is a 476-amino-acid chain: ATP synthase subunit beta (476 aa).

154 to 161 (GGAGVGKT) contacts ATP.

It belongs to the ATPase alpha/beta chains family. F-type ATPases have 2 components, CF(1) - the catalytic core - and CF(0) - the membrane proton channel. CF(1) has five subunits: alpha(3), beta(3), gamma(1), delta(1), epsilon(1). CF(0) has four main subunits: a(1), b(1), b'(1) and c(9-12).

The protein resides in the cell inner membrane. The catalysed reaction is ATP + H2O + 4 H(+)(in) = ADP + phosphate + 5 H(+)(out). Functionally, produces ATP from ADP in the presence of a proton gradient across the membrane. The catalytic sites are hosted primarily by the beta subunits. The protein is ATP synthase subunit beta of Rhodopseudomonas palustris (strain HaA2).